Reading from the N-terminus, the 510-residue chain is MIWHVQNENFILDSTSIFMKAFHLLLFNGSFIFPECILIFGLILLLMFDSTSVQKDRPWFYFISSTCLVISITALLFRWREEPIISFSGNFQTNNFNEIFQFLILLCSTLCIPLSVEYIECTEMAITEFLLFVLTATLGGMFLCGANDLITIFVAPECFSLCSYLLSGYTERDLRSNGASLQYLLMGGAGSSILVHGFSWLYGSSGGEIELQEIVNGLINTQMYNSPGISLALISITVGLGFKLSPAPFHQWTPDVYEGSLLHFVAFHSITSKVAASASATRILEFSLYFSSNEWHLLLEILAILSMILGNLLAITQTSMKRMLAYSSIGQIGYVIIGIIVGDSNDGYASMITYMLFYISMNLGTFACIVLFGLRTGTDNIRDYAGLYTKDPFLALSLALCLLSLGGLPPLAGFFGKLYLFWCGWQAGLYFLVSIGLLTSVLSIYYYLKIIKLLMTGRNQEITPYVRNYRRSPLRSNNSIELSMTVCVIASTIPGISMNPILAIAQDTLF.

Transmembrane regions (helical) follow at residues 24-44, 59-79, 99-119, 124-144, 149-169, 183-203, 229-249, 295-315, 323-343, 354-374, 395-415, and 418-438; these read LLLF…GLIL, WFYF…LFRW, IFQF…VEYI, MAIT…MFLC, LITI…LSGY, YLLM…WLYG, ISLA…PAPF, WHLL…LLAI, MLAY…IVGD, YMLF…LFGL, ALSL…AGFF, and LYLF…IGLL.

The protein belongs to the complex I subunit 2 family. NDH is composed of at least 16 different subunits, 5 of which are encoded in the nucleus.

The protein localises to the plastid. Its subcellular location is the chloroplast thylakoid membrane. It catalyses the reaction a plastoquinone + NADH + (n+1) H(+)(in) = a plastoquinol + NAD(+) + n H(+)(out). The enzyme catalyses a plastoquinone + NADPH + (n+1) H(+)(in) = a plastoquinol + NADP(+) + n H(+)(out). Functionally, NDH shuttles electrons from NAD(P)H:plastoquinone, via FMN and iron-sulfur (Fe-S) centers, to quinones in the photosynthetic chain and possibly in a chloroplast respiratory chain. The immediate electron acceptor for the enzyme in this species is believed to be plastoquinone. Couples the redox reaction to proton translocation, and thus conserves the redox energy in a proton gradient. The chain is NAD(P)H-quinone oxidoreductase subunit 2 A, chloroplastic from Triticum aestivum (Wheat).